Reading from the N-terminus, the 121-residue chain is Fumarate reductase subunit D (121 aa).

The next 3 helical transmembrane spans lie at 22–42, 57–77, and 100–120; these read GVWF…LLPL, AFVS…LPMW, and YACY…VIQL.

The protein belongs to the FrdD family. As to quaternary structure, part of an enzyme complex containing four subunits: a flavoprotein (FrdA), an iron-sulfur protein (FrdB), and two hydrophobic anchor proteins (FrdC and FrdD).

It localises to the cell inner membrane. Anchors the catalytic components of the fumarate reductase complex to the cell membrane, binds quinones. In Shewanella putrefaciens (strain CN-32 / ATCC BAA-453), this protein is Fumarate reductase subunit D.